We begin with the raw amino-acid sequence, 200 residues long: Holliday junction branch migration complex subunit RuvA (200 aa).

A domain I region spans residues 1-63 (MIASVRGVVT…EDSLTLYGFA (63 aa)). Positions 64-142 (DDNAKALFEL…PVPVGGDGAA (79 aa)) are domain II. The segment at 143-151 (GVTTGAWPE) is flexible linker. Positions 151 to 200 (EQVRQALVGLGWTAGQAEQAVAAVAETVDGEVPPVPVLLRQAIRLLGRTR) are domain III.

This sequence belongs to the RuvA family. Homotetramer. Forms an RuvA(8)-RuvB(12)-Holliday junction (HJ) complex. HJ DNA is sandwiched between 2 RuvA tetramers; dsDNA enters through RuvA and exits via RuvB. An RuvB hexamer assembles on each DNA strand where it exits the tetramer. Each RuvB hexamer is contacted by two RuvA subunits (via domain III) on 2 adjacent RuvB subunits; this complex drives branch migration. In the full resolvosome a probable DNA-RuvA(4)-RuvB(12)-RuvC(2) complex forms which resolves the HJ.

The protein localises to the cytoplasm. The RuvA-RuvB-RuvC complex processes Holliday junction (HJ) DNA during genetic recombination and DNA repair, while the RuvA-RuvB complex plays an important role in the rescue of blocked DNA replication forks via replication fork reversal (RFR). RuvA specifically binds to HJ cruciform DNA, conferring on it an open structure. The RuvB hexamer acts as an ATP-dependent pump, pulling dsDNA into and through the RuvAB complex. HJ branch migration allows RuvC to scan DNA until it finds its consensus sequence, where it cleaves and resolves the cruciform DNA. This chain is Holliday junction branch migration complex subunit RuvA, found in Salinispora arenicola (strain CNS-205).